The sequence spans 1209 residues: Major DNA-binding protein (1209 aa).

Residues 290 to 312 (NAGKGSGRAQRQGDGSGSKNSAS) are disordered. A zinc finger lies at 503 to 516 (CGLCNQATRPACAH). Residues 849-850 (FW) carry the Required for filament formation motif. The segment at 1182 to 1209 (QKRSLPDDILFDMGAPPEKKSGLTFDML) is required for nuclear localization.

It belongs to the herpesviridae major DNA-binding protein family. As to quaternary structure, homooligomers. Forms double-helical filaments necessary for the formation of replication compartments within the host nucleus. Interacts with the origin-binding protein. Interacts with the helicase primase complex; this interaction stimulates primer synthesis activity of the helicase-primase complex. Interacts with the DNA polymerase. Interacts with the alkaline exonuclease; this interaction increases its nuclease processivity.

The protein localises to the host nucleus. Plays several crucial roles in viral infection. Participates in the opening of the viral DNA origin to initiate replication by interacting with the origin-binding protein. May disrupt loops, hairpins and other secondary structures present on ssDNA to reduce and eliminate pausing of viral DNA polymerase at specific sites during elongation. Promotes viral DNA recombination by performing strand-transfer, characterized by the ability to transfer a DNA strand from a linear duplex to a complementary single-stranded DNA circle. Can also catalyze the renaturation of complementary single strands. Additionally, reorganizes the host cell nucleus, leading to the formation of prereplicative sites and replication compartments. This process is driven by the protein which can form double-helical filaments in the absence of DNA. This chain is Major DNA-binding protein, found in Equine herpesvirus 1 (strain Ab4p) (EHV-1).